Here is a 656-residue protein sequence, read N- to C-terminus: Vacuolar amino acid transporter 3 (656 aa).

Residues 1-109 (MSNSQSIKIK…VPSTSEDPDV (109 aa)) are disordered. The segment covering 15 to 28 (NENFASGSYSSRRS) has biased composition (polar residues). 2 positions are modified to phosphoserine: S37 and S53. Polar residues predominate over residues 50 to 71 (ISPSESNLPNNVAENTTDTPVN). Basic and acidic residues predominate over residues 75 to 97 (IRDENHNSRKGKDVTLNSDEAHS). S172 is subject to Phosphoserine. A run of 11 helical transmembrane segments spans residues 280–300 (AVLLLLKSFVGTGVLFLPKAF), 307–327 (FSSATLLIVGVLSHICFLLLI), 351–371 (FAILASIVVSQIGFSSAYISF), 389–409 (EYHLAVFIFIQFLVFVPLSLV), 419–439 (ALIADVFILLGILYLYFWDVI), 457–477 (FSLFIGVAIFTYEGICLILPI), 494–514 (VMAAISLLFISIGLLSYAAFG), 537–557 (LYAIAILLSTPLQLFPAIAII), 578–598 (YLRVLIVILAILISWAGSSRL), 601–621 (FVSMVGSVCCIPLIYMYPPML), and 636–656 (DIFMFTIGAFAMAFTTYMTFF).

Belongs to the amino acid/polyamine transporter 2 family.

It localises to the endoplasmic reticulum membrane. The protein resides in the vacuole membrane. Involved in amino acid efflux from the vacuole to the cytoplasm. Capable of transporting large neutral amino acids including tyrosine, glutamine, asparagine, isoleucine and leucine. Required for spore formation. This Schizosaccharomyces pombe (strain 972 / ATCC 24843) (Fission yeast) protein is Vacuolar amino acid transporter 3 (avt3).